The sequence spans 314 residues: MIFIYIFLFLSSAIIDSNGFAMAQKLEAKGGKGGKEWDDGAGHDNVAKVYIRGGLEGIQYIKFDYVKDGQSVEGSIHGVSGSGFTQMFEIDYQNGEHIVSVDGYFDKSGVMQALEFKTNRKTSEVIGYPKSNTKFSLGGVNGKMINGFHGSAGKALNSIGAYLTKVPPTKSELVGGWGGDYWDDGPNYDGVRKVYVTYMNTCIRSINIDYEKDGQVVTSSHGNKEGETEEFAIDYPNEFLISVEGTYDSILFPDHYVLVITSLSFKTSKGRISPTYGVVSGTKFVLESQGNAIVGFYGRNGGAFDAIGVYFSPI.

The N-terminal stretch at Met-1 to Ala-23 is a signal peptide. Jacalin-type lectin domains are found at residues Gln-24 to Lys-165 and Pro-168 to Pro-313.

Belongs to the jacalin lectin family.

This Arabidopsis thaliana (Mouse-ear cress) protein is Jacalin-related lectin 9 (JAL9).